The following is a 189-amino-acid chain: MSSLEISSSCFNQETKLPLSLPLVEGSTFEPPGKDMNEVEEKSKDIIKFTSEKLSVDEVSQLVISPLCGAISLFVGTTRNNFEGKKVISLEYEAYLPMAENEIRKICSDMRQKWPVRHIAVFHRLGLVPVTEASVIIAVSSAHRAASLEAVSYAIDALKARVPIWKKEIYEESSSSWKRNKECFWATSD.

S20 bears the Phosphoserine mark. Residues 143 to 144 (HR), K159, and 166 to 168 (KKE) contribute to the substrate site.

Belongs to the MoaE family. MOCS2B subfamily. In terms of assembly, heterotetramer; composed of 2 small (MOCS2A) and 2 large (MOCS2B) subunits.

It is found in the cytoplasm. The protein localises to the cytosol. The enzyme catalyses 2 [molybdopterin-synthase sulfur-carrier protein]-C-terminal-Gly-aminoethanethioate + cyclic pyranopterin phosphate + H2O = molybdopterin + 2 [molybdopterin-synthase sulfur-carrier protein]-C-terminal Gly-Gly + 2 H(+). It functions in the pathway cofactor biosynthesis; molybdopterin biosynthesis. In terms of biological role, catalytic subunit of the molybdopterin synthase complex, a complex that catalyzes the conversion of precursor Z into molybdopterin. Acts by mediating the incorporation of 2 sulfur atoms from thiocarboxylated MOCS2A into precursor Z to generate a dithiolene group. The chain is Molybdopterin synthase catalytic subunit from Bos taurus (Bovine).